The primary structure comprises 821 residues: Bifunctional dethiobiotin synthetase/7,8-diamino-pelargonic acid aminotransferase, mitochondrial (821 aa).

The interval 28–283 (SPAFAVFGAN…VHVLPPIPED (256 aa)) is dethiobiotin synthetase. 39–44 (GVGKTL) lines the ATP pocket. Thr43 is a binding site for Mg(2+). Thr72 provides a ligand contact to substrate. Residue Glu194 participates in Mg(2+) binding. 194-197 (ETAG) serves as a coordination point for ATP. The interval 316–820 (RLNSMQRKSK…AKVHRRLQKL (505 aa)) is 7,8-diamino-pelargonic acid aminotransferase. Position 374 to 375 (374 to 375 (WW)) interacts with (8S)-8-amino-7-oxononanoate. 436–437 (GS) is a binding site for pyridoxal 5'-phosphate. Residue Tyr482 coordinates (8S)-8-amino-7-oxononanoate. Asp626 contributes to the pyridoxal 5'-phosphate binding site. 2 residues coordinate (8S)-8-amino-7-oxononanoate: Lys655 and Gly689. At Lys655 the chain carries N6-(pyridoxal phosphate)lysine. Pyridoxal 5'-phosphate is bound at residue Ser691. Arg787 lines the (8S)-8-amino-7-oxononanoate pocket.

In the N-terminal section; belongs to the dethiobiotin synthetase family. It in the C-terminal section; belongs to the class-III pyridoxal-phosphate-dependent aminotransferase family. BioA subfamily. It depends on Mg(2+) as a cofactor. Pyridoxal 5'-phosphate is required as a cofactor.

It is found in the mitochondrion. The catalysed reaction is (7R,8S)-7,8-diammoniononanoate + CO2 + ATP = (4R,5S)-dethiobiotin + ADP + phosphate + 3 H(+). It carries out the reaction (8S)-8-amino-7-oxononanoate + S-adenosyl-L-methionine = S-adenosyl-4-methylsulfanyl-2-oxobutanoate + (7R,8S)-7,8-diammoniononanoate. It functions in the pathway cofactor biosynthesis; biotin biosynthesis; biotin from 7,8-diaminononanoate: step 1/2. It participates in cofactor biosynthesis; biotin biosynthesis; 7,8-diaminononanoate from 8-amino-7-oxononanoate (SAM route): step 1/1. Its function is as follows. Bifunctional enzyme that catalyzes two different reactions involved in the biotin biosynthesis. Catalyzes a mechanistically unusual reaction, the ATP-dependent insertion of CO2 between the N7 and N8 nitrogen atoms of 7,8-diaminopelargonic acid (DAPA) to form an ureido ring. In terms of biological role, catalyzes the transfer of the alpha-amino group from S-adenosyl-L-methionine (SAM) to 7-keto-8-aminopelargonic acid (KAPA) to form 7,8-diaminopelargonic acid (DAPA). It is the only aminotransferase known to utilize SAM as an amino donor. In Oryza sativa subsp. japonica (Rice), this protein is Bifunctional dethiobiotin synthetase/7,8-diamino-pelargonic acid aminotransferase, mitochondrial (BIO3-BIO1).